Consider the following 732-residue polypeptide: B-cadherin (732 aa).

A propeptide spanning residues 1-6 (LRRQKR) is cleaved from the precursor. Cadherin domains follow at residues 6 to 114 (RDWV…KPQF), 115 to 227 (TQEV…APEF), 228 to 339 (DPKT…APVF), 340 to 443 (DPPL…VNDH), and 444 to 554 (GPEP…RVDT). The Extracellular portion of the chain corresponds to 6–554 (RDWVIPPIKV…SCAQKPRVDT (549 aa)). A glycan (N-linked (GlcNAc...) asparagine) is linked at Asn-137. N-linked (GlcNAc...) asparagine glycosylation is present at Asn-410. A helical transmembrane segment spans residues 555–580 (GVPIVLAVLGAVLALLLVLLLLLLLV). Over 581-732 (RRRKVVKEPL…ELYGGGEDEE (152 aa)) the chain is Cytoplasmic.

Expressed in a wide variety of tissues.

It localises to the cell membrane. Cadherins are calcium-dependent cell adhesion proteins. They preferentially interact with themselves in a homophilic manner in connecting cells; cadherins may thus contribute to the sorting of heterogeneous cell types. B-cadherin may have important functions in neurogenesis, in at least some epithelia, and in embryogenesis. This Gallus gallus (Chicken) protein is B-cadherin (K-CAM).